We begin with the raw amino-acid sequence, 143 residues long: Transcriptional regulator SlyA (143 aa).

Residues 2-135 enclose the HTH marR-type domain; that stretch reads ESTLGSDLSR…LTNLVERLEQ (134 aa). Residues 49 to 72 constitute a DNA-binding region (H-T-H motif); the sequence is QIQLAKAIGIEQPSLVRTLDQLED.

Belongs to the SlyA family. Homodimer.

In terms of biological role, transcription regulator that can specifically activate or repress expression of target genes. The polypeptide is Transcriptional regulator SlyA (Edwardsiella tarda).